The primary structure comprises 105 residues: UPF0145 protein lpg0197 (105 aa).

Belongs to the UPF0145 family.

This chain is UPF0145 protein lpg0197, found in Legionella pneumophila subsp. pneumophila (strain Philadelphia 1 / ATCC 33152 / DSM 7513).